A 1067-amino-acid chain; its full sequence is Receptor-type guanylate cyclase gcy-10 (1067 aa).

A signal peptide spans 1–20 (MLKSLLIIVIVFLHRELCDG). The Extracellular portion of the chain corresponds to 21–438 (IQLILFDNWP…CVAKSSCVNY (418 aa)). An N-linked (GlcNAc...) asparagine glycan is attached at Asn411. Residues 439–459 (IPHIIAAVVIVTIIVIAIVII) form a helical membrane-spanning segment. At 460–1067 (VKQRRHKLNI…RGSIVPLQKA (608 aa)) the chain is on the cytoplasmic side. One can recognise a Protein kinase domain in the interval 509 to 791 (ALTSRRRVFG…ESISTVYPLS (283 aa)). Residues 515 to 523 (RVFGSYALV) and Lys534 each bind ATP. In terms of domain architecture, Guanylate cyclase spans 859 to 989 (TVMFVQICDF…DTVNFASRMQ (131 aa)).

It belongs to the adenylyl cyclase class-4/guanylyl cyclase family. In terms of tissue distribution, expressed predominantly in AWC but also in AWB, ASI, ASJ and ASK sensory neurons and in I1 interneuron.

The protein resides in the cell membrane. It localises to the cell projection. Its subcellular location is the cilium. It carries out the reaction GTP = 3',5'-cyclic GMP + diphosphate. Functionally, guanylate cyclase involved in the production of the second messenger cGMP. Regulates chemotaxis responses toward volatile odorants in AWC sensory neurons and their avoidance in AWB sensory neurons. May be involved in sensitivity to quinine by regulating egl-4 activity through the production of cGMP. Involved in phototransduction in ASJ neurons downstream of G protein coupled-photoreceptor lite-1. Required to maintain the expression of putative olfactory receptor str-2 in AWC neurons in adults. In AWB and AWC sensory neurons, mediates the recognition of food oders which subsequently allows for the detection of preferred food sources. Involved in AWB sensory neuron development and extension during postembryonic development, potentially via mediating localization of tub-1 and PI(4,5)P2 to membrane cilia. The polypeptide is Receptor-type guanylate cyclase gcy-10 (Caenorhabditis elegans).